A 445-amino-acid polypeptide reads, in one-letter code: Exodeoxyribonuclease 7 large subunit (445 aa).

The protein belongs to the XseA family. Heterooligomer composed of large and small subunits.

It localises to the cytoplasm. The catalysed reaction is Exonucleolytic cleavage in either 5'- to 3'- or 3'- to 5'-direction to yield nucleoside 5'-phosphates.. Bidirectionally degrades single-stranded DNA into large acid-insoluble oligonucleotides, which are then degraded further into small acid-soluble oligonucleotides. This Xanthomonas oryzae pv. oryzae (strain KACC10331 / KXO85) protein is Exodeoxyribonuclease 7 large subunit.